Consider the following 74-residue polypeptide: Benzylsuccinate synthase beta subunit (74 aa).

As to quaternary structure, heterohexamer composed of 2 alpha subunits, 2 beta subunits and 2 gamma subunits.

The enzyme catalyses toluene + fumarate = 2-benzylsuccinate. The protein operates within xenobiotic degradation; toluene degradation. Activated by the benzylsuccinate synthase activating enzyme BssD. Rapidly inactivated by oxygen. In terms of biological role, catalyzes the addition of fumarate to the methyl group of toluene, leading to the formation of benzylsuccinate. This chain is Benzylsuccinate synthase beta subunit (bssB), found in Thauera aromatica.